The following is a 565-amino-acid chain: 2-isopropylmalate synthase (565 aa).

The 276-residue stretch at 37–312 folds into the Pyruvate carboxyltransferase domain; the sequence is PRWCSVDLRD…DPMIDLSDID (276 aa). Aspartate 46, histidine 251, histidine 253, and asparagine 287 together coordinate Mg(2+). Positions 446–565 are regulatory domain; it reads EGGDPAASLE…SAVNRASRES (120 aa).

This sequence belongs to the alpha-IPM synthase/homocitrate synthase family. LeuA type 2 subfamily. Homodimer. The cofactor is Mg(2+).

It localises to the cytoplasm. The catalysed reaction is 3-methyl-2-oxobutanoate + acetyl-CoA + H2O = (2S)-2-isopropylmalate + CoA + H(+). It functions in the pathway amino-acid biosynthesis; L-leucine biosynthesis; L-leucine from 3-methyl-2-oxobutanoate: step 1/4. In terms of biological role, catalyzes the condensation of the acetyl group of acetyl-CoA with 3-methyl-2-oxobutanoate (2-ketoisovalerate) to form 3-carboxy-3-hydroxy-4-methylpentanoate (2-isopropylmalate). The sequence is that of 2-isopropylmalate synthase from Parafrankia sp. (strain EAN1pec).